The primary structure comprises 236 residues: Small ribosomal subunit protein uS2c (236 aa).

The protein belongs to the universal ribosomal protein uS2 family.

The protein resides in the plastid. It localises to the chloroplast. This is Small ribosomal subunit protein uS2c (rps2) from Crucihimalaya wallichii (Rock-cress).